The sequence spans 514 residues: GTPase-activating protein gyp1 (514 aa).

2 disordered regions span residues 17–65 (LWNG…QPPK) and 130–164 (LPRM…LHSS). Polar residues-rich tracts occupy residues 18–28 (WNGSSSATSDP) and 135–158 (RSTT…TTSR). The Rab-GAP TBC domain maps to 216 to 443 (GIPSEHRPIV…RMWDTYMAEG (228 aa)).

It is found in the golgi apparatus. The protein resides in the golgi stack. Its subcellular location is the cytoplasm. It localises to the nucleus. In terms of biological role, stimulates specifically the GTPase activity of ypt1. Functions on the Golgi as a negative regulator of ypt1. This is GTPase-activating protein gyp1 from Schizosaccharomyces pombe (strain 972 / ATCC 24843) (Fission yeast).